The chain runs to 368 residues: tRNA-specific 2-thiouridylase MnmA (368 aa).

ATP-binding positions include 12–19 and methionine 38; that span reads AMSGGVDS. The Nucleophile role is filled by cysteine 110. Cysteines 110 and 207 form a disulfide. Glycine 134 is an ATP binding site. Residues 157 to 159 are interaction with tRNA; the sequence is KDQ. The active-site Cysteine persulfide intermediate is cysteine 207. Residues 312-313 are interaction with tRNA; the sequence is RY.

The protein belongs to the MnmA/TRMU family.

The protein resides in the cytoplasm. The catalysed reaction is S-sulfanyl-L-cysteinyl-[protein] + uridine(34) in tRNA + AH2 + ATP = 2-thiouridine(34) in tRNA + L-cysteinyl-[protein] + A + AMP + diphosphate + H(+). Its function is as follows. Catalyzes the 2-thiolation of uridine at the wobble position (U34) of tRNA, leading to the formation of s(2)U34. The sequence is that of tRNA-specific 2-thiouridylase MnmA from Geobacter metallireducens (strain ATCC 53774 / DSM 7210 / GS-15).